The sequence spans 337 residues: UDP-3-O-acylglucosamine N-acyltransferase 2 (337 aa).

Histidine 238 acts as the Proton acceptor in catalysis.

It belongs to the transferase hexapeptide repeat family. LpxD subfamily. As to quaternary structure, homotrimer.

The catalysed reaction is a UDP-3-O-[(3R)-3-hydroxyacyl]-alpha-D-glucosamine + a (3R)-hydroxyacyl-[ACP] = a UDP-2-N,3-O-bis[(3R)-3-hydroxyacyl]-alpha-D-glucosamine + holo-[ACP] + H(+). The protein operates within bacterial outer membrane biogenesis; LPS lipid A biosynthesis. Functionally, catalyzes the N-acylation of UDP-3-O-acylglucosamine using 3-hydroxyacyl-ACP as the acyl donor. Is involved in the biosynthesis of lipid A, a phosphorylated glycolipid that anchors the lipopolysaccharide to the outer membrane of the cell. This Francisella tularensis subsp. tularensis (strain FSC 198) protein is UDP-3-O-acylglucosamine N-acyltransferase 2.